The chain runs to 56 residues: uncharacterized protein (56 aa).

This is an uncharacterized protein from Acheta domesticus (House cricket).